The sequence spans 231 residues: 7-cyano-7-deazaguanine synthase (231 aa).

8 to 18 (LSGGLDSATAA) contributes to the ATP binding site. Positions 189, 197, 200, and 203 each coordinate Zn(2+).

It belongs to the QueC family. Zn(2+) is required as a cofactor.

The enzyme catalyses 7-carboxy-7-deazaguanine + NH4(+) + ATP = 7-cyano-7-deazaguanine + ADP + phosphate + H2O + H(+). The protein operates within purine metabolism; 7-cyano-7-deazaguanine biosynthesis. Its function is as follows. Catalyzes the ATP-dependent conversion of 7-carboxy-7-deazaguanine (CDG) to 7-cyano-7-deazaguanine (preQ(0)). The chain is 7-cyano-7-deazaguanine synthase from Synechococcus elongatus (strain ATCC 33912 / PCC 7942 / FACHB-805) (Anacystis nidulans R2).